A 92-amino-acid polypeptide reads, in one-letter code: Small ribosomal subunit protein uS19 (92 aa).

The protein belongs to the universal ribosomal protein uS19 family.

Its function is as follows. Protein S19 forms a complex with S13 that binds strongly to the 16S ribosomal RNA. In Lachnoclostridium phytofermentans (strain ATCC 700394 / DSM 18823 / ISDg) (Clostridium phytofermentans), this protein is Small ribosomal subunit protein uS19.